Reading from the N-terminus, the 372-residue chain is Spermidine/putrescine import ATP-binding protein PotA (372 aa).

The ABC transporter domain maps to 11–241; that stretch reads IELRSIKKSY…PANLFVARFI (231 aa). 43–50 contributes to the ATP binding site; it reads GPSGCGKT.

It belongs to the ABC transporter superfamily. Spermidine/putrescine importer (TC 3.A.1.11.1) family. The complex is composed of two ATP-binding proteins (PotA), two transmembrane proteins (PotB and PotC) and a solute-binding protein (PotD).

It localises to the cell inner membrane. It carries out the reaction ATP + H2O + polyamine-[polyamine-binding protein]Side 1 = ADP + phosphate + polyamineSide 2 + [polyamine-binding protein]Side 1.. In terms of biological role, part of the ABC transporter complex PotABCD involved in spermidine/putrescine import. Responsible for energy coupling to the transport system. This chain is Spermidine/putrescine import ATP-binding protein PotA, found in Haemophilus influenzae (strain ATCC 51907 / DSM 11121 / KW20 / Rd).